A 243-amino-acid chain; its full sequence is Juxtaposed with another zinc finger protein 1 (243 aa).

A C2H2-type 1 zinc finger spans residues 12–37; it reads NTCRFGGCGLHFPTLADLIEHIEDNH. The required for interaction with NR2C2 stretch occupies residues 39 to 79; the sequence is DTDPRVLEKQELQQPTYVALSYINRFMTDAARREQESLKKK. Polar residues predominate over residues 89-108; that stretch reads SSSVSRGNVSTPPRHSSGSL. Residues 89–151 form a disordered region; it reads SSSVSRGNVS…SDSDESWTTE (63 aa). Threonine 109 and threonine 113 each carry phosphothreonine. Low complexity predominate over residues 118–130; it reads PSSSFRSSTPTGS. Over residues 131 to 148 the composition is skewed to acidic residues; sequence EYDEEEVDYEESDSDESW. The segment at 173–198 adopts a C2H2-type 2 zinc-finger fold; sequence FACPVPGCKKRYKNVNGIKYHAKNGH. A C2H2-type 3; degenerate zinc finger spans residues 208 to 230; it reads FKCRCGKSYKTAQGLRHHTINFH.

As to quaternary structure, interacts with NR2C2 (via ligand-binding region). Highest expression in testis with moderate levels in colon, placenta, prostate and ovary and low levels in brain, spleen, liver and small intestine.

The protein resides in the nucleus. Functionally, acts as a transcriptional corepressor of orphan nuclear receptor NR2C2. Inhibits expression of the gluconeogenesis enzyme PCK2 through inhibition of NR2C2 activity. Also involved in transcriptional activation of NAMPT by promoting expression of PPARA and PPARD. Plays a role in lipid metabolism by suppressing lipogenesis, increasing lipolysis and decreasing lipid accumulation in adipose tissue. Plays a role in glucose homeostasis by improving glucose metabolism and insulin sensitivity. The protein is Juxtaposed with another zinc finger protein 1 of Homo sapiens (Human).